The chain runs to 497 residues: Guanosine-5'-triphosphate,3'-diphosphate pyrophosphatase (497 aa).

Belongs to the GppA/Ppx family. GppA subfamily.

It carries out the reaction guanosine 3'-diphosphate 5'-triphosphate + H2O = guanosine 3',5'-bis(diphosphate) + phosphate + H(+). The protein operates within purine metabolism; ppGpp biosynthesis; ppGpp from GTP: step 2/2. Catalyzes the conversion of pppGpp to ppGpp. Guanosine pentaphosphate (pppGpp) is a cytoplasmic signaling molecule which together with ppGpp controls the 'stringent response', an adaptive process that allows bacteria to respond to amino acid starvation, resulting in the coordinated regulation of numerous cellular activities. In Vibrio parahaemolyticus serotype O3:K6 (strain RIMD 2210633), this protein is Guanosine-5'-triphosphate,3'-diphosphate pyrophosphatase.